Consider the following 157-residue polypeptide: Crossover junction endodeoxyribonuclease RuvC (157 aa).

Active-site residues include Asp7, Glu67, and Asp140. Residues Asp7, Glu67, and Asp140 each contribute to the Mg(2+) site.

Belongs to the RuvC family. In terms of assembly, homodimer which binds Holliday junction (HJ) DNA. The HJ becomes 2-fold symmetrical on binding to RuvC with unstacked arms; it has a different conformation from HJ DNA in complex with RuvA. In the full resolvosome a probable DNA-RuvA(4)-RuvB(12)-RuvC(2) complex forms which resolves the HJ. The cofactor is Mg(2+).

The protein resides in the cytoplasm. It carries out the reaction Endonucleolytic cleavage at a junction such as a reciprocal single-stranded crossover between two homologous DNA duplexes (Holliday junction).. Its function is as follows. The RuvA-RuvB-RuvC complex processes Holliday junction (HJ) DNA during genetic recombination and DNA repair. Endonuclease that resolves HJ intermediates. Cleaves cruciform DNA by making single-stranded nicks across the HJ at symmetrical positions within the homologous arms, yielding a 5'-phosphate and a 3'-hydroxyl group; requires a central core of homology in the junction. The consensus cleavage sequence is 5'-(A/T)TT(C/G)-3'. Cleavage occurs on the 3'-side of the TT dinucleotide at the point of strand exchange. HJ branch migration catalyzed by RuvA-RuvB allows RuvC to scan DNA until it finds its consensus sequence, where it cleaves and resolves the cruciform DNA. This chain is Crossover junction endodeoxyribonuclease RuvC, found in Rickettsia bellii (strain RML369-C).